Here is a 707-residue protein sequence, read N- to C-terminus: Leucine-rich repeat neuronal protein 3 (707 aa).

Positions 1-22 (MKDTPLQVHVLLGLAITTLVQA) are cleaved as a signal peptide. Residues 23 to 69 (IDKKVDCPQLCTCEIRPWFTPRSIYMEASTVDCNDLGLLNFPARLPA) enclose the LRRNT domain. The Extracellular segment spans residues 23–626 (IDKKVDCPQL…DGKEYGKNHT (604 aa)). 12 LRR repeats span residues 70–91 (DTQI…TDFP), 93–114 (NLTG…NVQK), 117–138 (QLLS…CLYG), 141–162 (NLQE…AFIG), 165–186 (NLLR…WFDA), 189–210 (NLEI…NFQP), 213–234 (KLRS…ALAG), 237–258 (NLES…ALQK), 261–282 (NLKF…DFSN), 285–304 (HLKE…DSLA), 310–332 (DLRK…AFFR), and 335–358 (KLES…ESLP). 2 N-linked (GlcNAc...) asparagine glycosylation sites follow: N93 and N103. N223 carries an N-linked (GlcNAc...) asparagine glycan. Residues 368 to 421 (NPIRCDCVIRWINMNKTNIRFMEPDSLFCVDPPEFQGQNVRQVHFRDMMEICLP) form the LRRCT domain. N382 is a glycosylation site (N-linked (GlcNAc...) asparagine). The Ig-like C2-type domain occupies 421–514 (PLIAPESFPS…DLKSIMIKVG (94 aa)). The cysteines at positions 444 and 496 are disulfide-linked. 4 N-linked (GlcNAc...) asparagine glycosylation sites follow: N522, N579, N608, and N624. The 92-residue stretch at 523 to 614 (GSLNIKIRDI…QCVNVTTKSL (92 aa)) folds into the Fibronectin type-III domain. Residues 627–647 (VFVACVGGLLGIIGVMCLFSC) traverse the membrane as a helical segment. Topologically, residues 648–707 (VSQEGSSEGEHSYAVNHCHKPALAFSELYPPLINLWESSKEKRATLEVKATAIGVPTNMS) are cytoplasmic.

In terms of tissue distribution, expressed in the brain, in Stronger expression in the ventricular zone and anlage of thalamus, spinal cord, and dorsal root ganglion in 11-17 dpc cerebellum and cerebral cortex in adults.

The protein localises to the membrane. This is Leucine-rich repeat neuronal protein 3 (Lrrn3) from Mus musculus (Mouse).